Consider the following 420-residue polypeptide: Ammonium transporter Amt2 (420 aa).

Transmembrane regions (helical) follow at residues 34-54 (VFFL…FAML), 71-91 (NMVD…ILCS), 120-140 (SWFF…GGVA), 149-169 (VLIS…LGPW), 180-200 (AGSL…IAAL), 220-240 (IPMA…FNVG), 250-270 (GLVC…ALIA), 273-293 (NDVL…CSGT), 295-315 (VVSP…VPIV), 339-359 (VIGA…AGGV), and 365-385 (IIGA…LAKI).

This sequence belongs to the ammonia transporter channel (TC 1.A.11.2) family. Homotrimer. Interacts and forms a complex with GlnK2.

It is found in the cell membrane. In terms of biological role, involved in the uptake of ammonium/ammonia (NH(4)(+)/NH(3)). Transport is electrogenic. The sequence is that of Ammonium transporter Amt2 from Methanocaldococcus jannaschii (strain ATCC 43067 / DSM 2661 / JAL-1 / JCM 10045 / NBRC 100440) (Methanococcus jannaschii).